We begin with the raw amino-acid sequence, 396 residues long: MQTFVLLALVAACSAAVIQVPTHKTESLRAKLIKEGKYTAFLASQHAARAQQLNTGFQPFVDYFDDFYLGNITLGTPPQPATVVLDTGSSNLWVIDAACKTQACNGYPDSGYTKQKFDTTKSTTFVKETRKFSIQYGSGSCNGYLGKDVLNFGGLTVQSQEFGVSTHLADVFGYQPVDGILGLGWPALAVDQVVPPMQNLIAQKQLDAPLFTVWLDRNLQIAQGTPGGLITYGAIDTVNCAKQVTYVPLSAKTYWQFPLDAFAVGTYSETKKDQVISDTGTSWLGAPNTIVSAIVKQTKAVFDWSTELYTVDCSTMKTQPDLIFTIGGAQFPVKSVEYVLDLQLGGGKCALAVFSMGSGGFGPSWILGDTFIRQYCNVYDIGNGQIGFATAVHKGL.

An N-terminal signal peptide occupies residues 1–15 (MQTFVLLALVAACSA). Residues 68 to 389 (YLGNITLGTP…DIGNGQIGFA (322 aa)) form the Peptidase A1 domain. N-linked (GlcNAc...) asparagine glycosylation is present at Asn71. Residue Asp86 is part of the active site. A disulfide bond links Cys99 and Cys104. Residue Asp278 is part of the active site. Residues Cys313 and Cys349 are joined by a disulfide bond.

Belongs to the peptidase A1 family. As to quaternary structure, interacts with B.thuringiensis endotoxin Cry6Aa; the interaction prevents Cry6Aa proteolysis by host gut proteases.

The protein resides in the cytoplasm. The protein localises to the lysosome. It localises to the secreted. Functionally, aspartic protease, which is part of the necrosis cell death pathway. Promotes B.thuringiensis Cry6Aa stability by preventing its proteolysis by host gut proteases. Required for Cry6Aa-induced necrotic death of intestinal cells. Cry6Aa uptake into the host intestinal cells triggers an increase in intracellular Ca(2+) levels leading to lysosome rupture and to the subsequent release of asp-1 which leads to necrosis. The chain is Aspartic protease 1 from Caenorhabditis elegans.